Here is a 353-residue protein sequence, read N- to C-terminus: Nicotinate-nucleotide--dimethylbenzimidazole phosphoribosyltransferase (353 aa).

The Proton acceptor role is filled by Glu319.

It belongs to the CobT family.

It catalyses the reaction 5,6-dimethylbenzimidazole + nicotinate beta-D-ribonucleotide = alpha-ribazole 5'-phosphate + nicotinate + H(+). Its pathway is nucleoside biosynthesis; alpha-ribazole biosynthesis; alpha-ribazole from 5,6-dimethylbenzimidazole: step 1/2. Functionally, catalyzes the synthesis of alpha-ribazole-5'-phosphate from nicotinate mononucleotide (NAMN) and 5,6-dimethylbenzimidazole (DMB). The polypeptide is Nicotinate-nucleotide--dimethylbenzimidazole phosphoribosyltransferase (Chlorobaculum tepidum (strain ATCC 49652 / DSM 12025 / NBRC 103806 / TLS) (Chlorobium tepidum)).